A 133-amino-acid chain; its full sequence is Large ribosomal subunit protein bL20 (133 aa).

This sequence belongs to the bacterial ribosomal protein bL20 family.

In terms of biological role, binds directly to 23S ribosomal RNA and is necessary for the in vitro assembly process of the 50S ribosomal subunit. It is not involved in the protein synthesizing functions of that subunit. This Bartonella quintana (strain Toulouse) (Rochalimaea quintana) protein is Large ribosomal subunit protein bL20.